The primary structure comprises 107 residues: N(4)-acetylcytidine amidohydrolase (107 aa).

Residues 9–105 (TFFEFLTPLI…KLFVIEYELI (97 aa)) form the ASCH domain. K23 acts as the Proton acceptor in catalysis. T26 functions as the Nucleophile in the catalytic mechanism. E76 acts as the Proton donor in catalysis.

The protein belongs to the N(4)-acetylcytidine amidohydrolase family.

The catalysed reaction is N(4)-acetylcytidine + H2O = cytidine + acetate + H(+). The enzyme catalyses N(4)-acetyl-2'-deoxycytidine + H2O = 2'-deoxycytidine + acetate + H(+). It catalyses the reaction N(4)-acetylcytosine + H2O = cytosine + acetate + H(+). Functionally, catalyzes the hydrolysis of N(4)-acetylcytidine (ac4C). This is N(4)-acetylcytidine amidohydrolase from Vibrio parahaemolyticus serotype O3:K6 (strain RIMD 2210633).